Reading from the N-terminus, the 245-residue chain is Type III pantothenate kinase (245 aa).

Residue 6 to 13 (DVGNTAMK) coordinates ATP. Substrate is bound by residues tyrosine 93 and 100 to 103 (GVDR). The active-site Proton acceptor is the aspartate 102. Residue aspartate 121 coordinates K(+). Residue serine 124 coordinates ATP. Position 175 (threonine 175) interacts with substrate.

Belongs to the type III pantothenate kinase family. In terms of assembly, homodimer. NH4(+) is required as a cofactor. Requires K(+) as cofactor.

The protein localises to the cytoplasm. The catalysed reaction is (R)-pantothenate + ATP = (R)-4'-phosphopantothenate + ADP + H(+). The protein operates within cofactor biosynthesis; coenzyme A biosynthesis; CoA from (R)-pantothenate: step 1/5. Its function is as follows. Catalyzes the phosphorylation of pantothenate (Pan), the first step in CoA biosynthesis. This Alcanivorax borkumensis (strain ATCC 700651 / DSM 11573 / NCIMB 13689 / SK2) protein is Type III pantothenate kinase.